The sequence spans 150 residues: Protein A151R (150 aa).

The protein belongs to the asfivirus A151R family. In terms of assembly, monomer. Homodimer. Interacts with protein B119L. Interacts with membrane protein E248R. Zn(2+) serves as cofactor.

Its function is as follows. May participate in a redox cascade for the formation of disulfide bonds in viral proteins. The protein is Protein A151R of African swine fever virus (isolate Tick/Malawi/Lil 20-1/1983) (ASFV).